The primary structure comprises 582 residues: Threonine--tRNA ligase (582 aa).

The interval 185–478 is catalytic; it reads DHRKLGKELE…LTEQYGGAFP (294 aa). Zn(2+)-binding residues include Cys278, His329, and His455.

The protein belongs to the class-II aminoacyl-tRNA synthetase family. Homodimer. Requires Zn(2+) as cofactor.

The protein localises to the cytoplasm. It catalyses the reaction tRNA(Thr) + L-threonine + ATP = L-threonyl-tRNA(Thr) + AMP + diphosphate + H(+). Its function is as follows. Catalyzes the attachment of threonine to tRNA(Thr) in a two-step reaction: L-threonine is first activated by ATP to form Thr-AMP and then transferred to the acceptor end of tRNA(Thr). Also edits incorrectly charged L-seryl-tRNA(Thr). The polypeptide is Threonine--tRNA ligase (Dehalococcoides mccartyi (strain ATCC BAA-2266 / KCTC 15142 / 195) (Dehalococcoides ethenogenes (strain 195))).